A 193-amino-acid polypeptide reads, in one-letter code: Thymidine kinase (193 aa).

ATP is bound by residues 16-23 (GPMFSGKS) and 89-92 (DEIQ). E90 functions as the Proton acceptor in the catalytic mechanism. Positions 146, 149, 184, and 187 each coordinate Zn(2+).

Belongs to the thymidine kinase family. As to quaternary structure, homotetramer.

The protein resides in the cytoplasm. The catalysed reaction is thymidine + ATP = dTMP + ADP + H(+). The protein is Thymidine kinase of Caldanaerobacter subterraneus subsp. tengcongensis (strain DSM 15242 / JCM 11007 / NBRC 100824 / MB4) (Thermoanaerobacter tengcongensis).